A 310-amino-acid polypeptide reads, in one-letter code: NADP-dependent D-sorbitol-6-phosphate dehydrogenase (310 aa).

The active-site Proton donor is the Y48. A substrate-binding site is contributed by H108. 210-272 (TPLGGAAANK…SSKIQRLKEN (63 aa)) lines the NADP(+) pocket.

Belongs to the aldo/keto reductase family.

The catalysed reaction is D-sorbitol 6-phosphate + NADP(+) = aldehydo-D-glucose 6-phosphate + NADPH + H(+). In terms of biological role, synthesizes sorbitol-6-phosphate, a key intermediate in the synthesis of sorbitol which is a major photosynthetic product in many members of the Rosaceae family. The chain is NADP-dependent D-sorbitol-6-phosphate dehydrogenase (S6PDH) from Malus domestica (Apple).